The primary structure comprises 155 residues: Transcriptional repressor NrdR (155 aa).

Residues 3-34 (CPFCHAEETKVVDSRLVADGAQVRRRRECLEC) fold into a zinc finger. One can recognise an ATP-cone domain in the interval 49-139 (PLIIKRDGRR…VYKRFKDVSD (91 aa)).

Belongs to the NrdR family. Zn(2+) serves as cofactor.

Negatively regulates transcription of bacterial ribonucleotide reductase nrd genes and operons by binding to NrdR-boxes. The chain is Transcriptional repressor NrdR from Legionella pneumophila (strain Paris).